Here is a 469-residue protein sequence, read N- to C-terminus: 3-isopropylmalate dehydratase large subunit (469 aa).

[4Fe-4S] cluster-binding residues include Cys347, Cys408, and Cys411.

This sequence belongs to the aconitase/IPM isomerase family. LeuC type 1 subfamily. Heterodimer of LeuC and LeuD. It depends on [4Fe-4S] cluster as a cofactor.

It catalyses the reaction (2R,3S)-3-isopropylmalate = (2S)-2-isopropylmalate. Its pathway is amino-acid biosynthesis; L-leucine biosynthesis; L-leucine from 3-methyl-2-oxobutanoate: step 2/4. Catalyzes the isomerization between 2-isopropylmalate and 3-isopropylmalate, via the formation of 2-isopropylmaleate. The sequence is that of 3-isopropylmalate dehydratase large subunit from Histophilus somni (strain 129Pt) (Haemophilus somnus).